Here is a 149-residue protein sequence, read N- to C-terminus: Nucleoside diphosphate kinase (149 aa).

ATP contacts are provided by K9, F57, R85, T91, R102, and N112. H115 acts as the Pros-phosphohistidine intermediate in catalysis.

This sequence belongs to the NDK family. As to quaternary structure, homotetramer. It depends on Mg(2+) as a cofactor.

The protein localises to the cytoplasm. It catalyses the reaction a 2'-deoxyribonucleoside 5'-diphosphate + ATP = a 2'-deoxyribonucleoside 5'-triphosphate + ADP. It carries out the reaction a ribonucleoside 5'-diphosphate + ATP = a ribonucleoside 5'-triphosphate + ADP. Its function is as follows. Major role in the synthesis of nucleoside triphosphates other than ATP. The ATP gamma phosphate is transferred to the NDP beta phosphate via a ping-pong mechanism, using a phosphorylated active-site intermediate. This is Nucleoside diphosphate kinase from Thermomicrobium roseum (strain ATCC 27502 / DSM 5159 / P-2).